A 585-amino-acid polypeptide reads, in one-letter code: Testis-specific serine kinase substrate (585 aa).

A compositionally biased stretch (low complexity) spans E91–A108. Residues E91–P125 form a disordered region. S224 is modified (phosphoserine). Disordered regions lie at residues H264–E312 and L559–Q585. Position 281 is a phosphoserine; by TSSK1 and TSSK2 (S281). S309 carries the phosphoserine modification.

Phosphorylated on serine residue(s) by STK22A/TSSK1 and STK22B/TSSK2. Testis specific.

It is found in the cytoplasm. The protein localises to the cytoskeleton. It localises to the microtubule organizing center. Its subcellular location is the centrosome. The protein resides in the centriole. It is found in the cytoplasmic vesicle. The protein localises to the secretory vesicle. It localises to the acrosome. Its function is as follows. May play a role in testicular physiology, most probably in the process of spermatogenesis or spermatid development. The protein is Testis-specific serine kinase substrate (Tsks) of Mus musculus (Mouse).